Reading from the N-terminus, the 395-residue chain is Phosphoglycerate kinase (395 aa).

Residues 21-23 (DFN), Arg-36, 59-62 (HLGR), Arg-120, and Arg-153 contribute to the substrate site. ATP-binding positions include Lys-203, Gly-294, Glu-325, and 351 to 354 (GGDS).

It belongs to the phosphoglycerate kinase family. In terms of assembly, monomer.

It localises to the cytoplasm. The enzyme catalyses (2R)-3-phosphoglycerate + ATP = (2R)-3-phospho-glyceroyl phosphate + ADP. The protein operates within carbohydrate degradation; glycolysis; pyruvate from D-glyceraldehyde 3-phosphate: step 2/5. The sequence is that of Phosphoglycerate kinase from Finegoldia magna (strain ATCC 29328 / DSM 20472 / WAL 2508) (Peptostreptococcus magnus).